Here is a 294-residue protein sequence, read N- to C-terminus: Protein CHLOROPLAST J-LIKE DOMAIN 1, chloroplastic (294 aa).

The N-terminal 58 residues, 1–58 (MAPALSTSCSSVMAFSTSNALRYHHPQISLRNSLRAPKSPSFVRLPLGKVLQSRIVIR), are a transit peptide targeting the chloroplast. At 59–164 (AASSAAGNPQ…GPRFSRSSKN (106 aa)) the chain is on the stromal side. The tract at residues 74 to 152 (NPYEVLGVNP…IKYADKQPII (79 aa)) is J-like domain. A helical membrane pass occupies residues 165–182 (DMLINLAISVVFSAWIAI). Topologically, residues 183–233 (KRNVEYKPLQFMSFVFVYRIFEKLKSFEAPSSPIYNEEGEESGRGLRMGKR) are chloroplast intermembrane. A helical transmembrane segment spans residues 234–256 (LLRSLSLVFGSILLASLAYTGFL). At 257 to 275 (NGIEYMGYSIPMVLYNNQE) the chain is on the stromal side. A helical transmembrane segment spans residues 276-293 (LIVTASSAFMLYVIASFY). Position 294 (Arg-294) is a topological domain, chloroplast intermembrane.

In terms of assembly, interacts (via J-like domain) with ARC6 (via J domain).

Its subcellular location is the plastid. The protein localises to the chloroplast inner membrane. In terms of biological role, probably involved in the regulation of the fatty acid metabolic process in chloroplasts, especially chloroplastic galactolipids monogalactosyldiacylglycerol (MGDG) and digalactosyldiacylglycerol (DGDG). The chain is Protein CHLOROPLAST J-LIKE DOMAIN 1, chloroplastic from Arabidopsis thaliana (Mouse-ear cress).